Reading from the N-terminus, the 106-residue chain is Large ribosomal subunit protein uL22 (106 aa).

Belongs to the universal ribosomal protein uL22 family. In terms of assembly, part of the 50S ribosomal subunit.

Functionally, this protein binds specifically to 23S rRNA; its binding is stimulated by other ribosomal proteins, e.g. L4, L17, and L20. It is important during the early stages of 50S assembly. It makes multiple contacts with different domains of the 23S rRNA in the assembled 50S subunit and ribosome. Its function is as follows. The globular domain of the protein is located near the polypeptide exit tunnel on the outside of the subunit, while an extended beta-hairpin is found that lines the wall of the exit tunnel in the center of the 70S ribosome. This Nautilia profundicola (strain ATCC BAA-1463 / DSM 18972 / AmH) protein is Large ribosomal subunit protein uL22.